The sequence spans 305 residues: Ribosomal large subunit pseudouridine synthase C (305 aa).

One can recognise an S4 RNA-binding domain in the interval 11–70 (SRLDKYLKRLYPLLTQGVIEKALRQKQITVNSQKAEASLRVKGGDKIFINDKFNLPVKQP). Asp-140 is a catalytic residue.

This sequence belongs to the pseudouridine synthase RluA family.

It carries out the reaction uridine(955/2504/2580) in 23S rRNA = pseudouridine(955/2504/2580) in 23S rRNA. In terms of biological role, responsible for synthesis of pseudouridine from uracil at positions 955, 2504 and 2580 in 23S ribosomal RNA. The protein is Ribosomal large subunit pseudouridine synthase C (rluC) of Rickettsia felis (strain ATCC VR-1525 / URRWXCal2) (Rickettsia azadi).